We begin with the raw amino-acid sequence, 274 residues long: Kit ligand (274 aa).

Residues 1–25 (MKKTQTWIITCIYLQLLLFNPLVRT) form the signal peptide. The residue at position 26 (glutamine 26) is a Pyrrolidone carboxylic acid. Over 26-215 (QGICRNRVTD…SDSIEDSSLQ (190 aa)) the chain is Extracellular. Intrachain disulfides connect cysteine 29–cysteine 114 and cysteine 68–cysteine 164. N-linked (GlcNAc...) asparagine glycosylation is found at asparagine 90, asparagine 97, asparagine 145, and asparagine 196. Residues 216-238 (WAAVALPAFFSLVIGFAFGALYW) form a helical membrane-spanning segment. The Cytoplasmic portion of the chain corresponds to 239 to 274 (KKKQPNLTRTVENIQINEEDNEISMLQEKEREFQEV).

Belongs to the SCF family. In terms of assembly, homodimer, non-covalently linked. Heterotetramer with KIT, binding two KIT molecules; thereby mediates KIT dimerization and subsequent activation by autophosphorylation. In terms of processing, a soluble form is produced by proteolytic processing of the extracellular domain.

It localises to the cytoplasm. It is found in the cytoskeleton. The protein localises to the cell membrane. Its subcellular location is the cell projection. The protein resides in the lamellipodium. It localises to the filopodium. It is found in the secreted. Ligand for the receptor-type protein-tyrosine kinase KIT. Plays an essential role in the regulation of cell survival and proliferation, hematopoiesis, stem cell maintenance, gametogenesis, mast cell development, migration and function, and in melanogenesis. KITLG/SCF binding can activate several signaling pathways. Promotes phosphorylation of PIK3R1, the regulatory subunit of phosphatidylinositol 3-kinase, and subsequent activation of the kinase AKT1. KITLG/SCF and KIT also transmit signals via GRB2 and activation of RAS, RAF1 and the MAP kinases MAPK1/ERK2 and/or MAPK3/ERK1. KITLG/SCF and KIT promote activation of STAT family members STAT1, STAT3 and STAT5. KITLG/SCF and KIT promote activation of PLCG1, leading to the production of the cellular signaling molecules diacylglycerol and inositol 1,4,5-trisphosphate. KITLG/SCF acts synergistically with other cytokines, probably interleukins. This chain is Kit ligand (KITLG), found in Sus scrofa (Pig).